The following is a 144-amino-acid chain: MNTQILSQKTRYSAYIVYKTIYRFHGFKHIGVGFIGHGTPKAKRWERKDLGNDWLGCKKKFKASKKQKFYSNKSTFTDKPITHLIKLEEGEDGWMATEFGEFFAEGGGLLDCDEIVLSVIDIDYAYWKCGLIIQGIDIRPTKSP.

In Arabidopsis thaliana (Mouse-ear cress), this protein is Putative protein PHLOEM PROTEIN 2-LIKE B4 (PP2B4).